A 439-amino-acid chain; its full sequence is Tol-Pal system protein TolB (439 aa).

Positions Met-1–Ala-22 are cleaved as a signal peptide.

This sequence belongs to the TolB family. As to quaternary structure, the Tol-Pal system is composed of five core proteins: the inner membrane proteins TolA, TolQ and TolR, the periplasmic protein TolB and the outer membrane protein Pal. They form a network linking the inner and outer membranes and the peptidoglycan layer.

Its subcellular location is the periplasm. Its function is as follows. Part of the Tol-Pal system, which plays a role in outer membrane invagination during cell division and is important for maintaining outer membrane integrity. The polypeptide is Tol-Pal system protein TolB (Xanthomonas campestris pv. campestris (strain 8004)).